A 390-amino-acid chain; its full sequence is GLH-binding kinase 1 (390 aa).

Positions 38–338 (YVNLSFLNAG…VEDALNHPYV (301 aa)) constitute a Protein kinase domain. ATP contacts are provided by residues 44–52 (LNAGAQGTV) and Lys67. Catalysis depends on Asp164, which acts as the Proton acceptor. The residue at position 198 (Ser198) is a Phosphoserine. Phosphotyrosine is present on Tyr200.

Belongs to the protein kinase superfamily. CMGC Ser/Thr protein kinase family. MAP kinase subfamily. Interacts with glh-1, glh-2 (via C-terminus), glh-3 (via C-terminus) and glh-4 (via C-terminus). Interacts with csn-5; the interaction may prevent glh-1 degradation induced by kgb-1. Interacts with fos-1. Mg(2+) is required as a cofactor. May be phosphorylated by mek-1 on Ser-198 and/or Tyr-200. Phosphorylation is induced upon Cu(2+) and arsenite-mediated cell stimulation and by fasting. In terms of tissue distribution, expressed in somatic and germline tissues.

Its subcellular location is the cytoplasm. It carries out the reaction L-seryl-[protein] + ATP = O-phospho-L-seryl-[protein] + ADP + H(+). The catalysed reaction is L-threonyl-[protein] + ATP = O-phospho-L-threonyl-[protein] + ADP + H(+). Activated by mek-1 mediated phosphorylation. No differences in basal activation between larvae and adults. Inhibited by phosphatase vhp-1. In terms of biological role, mitogen-activated protein kinase which is an essential component of the JNK pathway composed of mlk-1, mek-1 and kgb-1. Phosphorylates the transcription factor fos-1 which prevents fos-1 dimerization and promoter binding and results in activation of target genes including F53A9.2/kreg-1 and lys-3/kreg-2. Phosphorylates jun-1 and activates the AP-1 transcription factor which is a heterodimer of jun-1 and fos-1. Phosphorylates glh-1 in vitro which may play a role in controlling glh-1 protein levels in the germline by targeting it for degradation by the proteasome. Required for oogenesis and probably also for spermatogenesis. Involved in the response to environmental stress such as heavy metals, infection and protein folding stress in an age-dependent manner. In larvae, has a protective role which becomes detrimental in adults. May control susceptibility to infection, heavy metal stress and premature lethality by regulating daf-16 cellular localization. Involved in the transcriptional response to bacterial pore-forming toxins and to fasting. Required for fasting-induced longevity. Involved in axon regeneration after injury downstream of tyrosine receptor svh-2. The polypeptide is GLH-binding kinase 1 (Caenorhabditis elegans).